The primary structure comprises 136 residues: Ciliary microtubule inner protein 1 (136 aa).

Its subcellular location is the cell projection. The protein resides in the cilium. This Mus musculus (Mouse) protein is Ciliary microtubule inner protein 1 (Cimip1).